The following is a 412-amino-acid chain: GATOR complex protein NPRL2 (412 aa).

It belongs to the NPR2 family. As to quaternary structure, component of the GATOR complex consisting of mio, Nup44A/Seh1, Im11, Nplr3, Nplr2, Wdr24, Wdr59 and Sec13. Within the GATOR complex, probable component of the GATOR1 subcomplex which is likely composed of Iml1, Nplr2 and Nplr3. Interacts with Nprl3.

The protein resides in the cytoplasm. It is found in the lysosome. In terms of biological role, an essential component of the GATOR subcomplex GATOR1 which functions as an inhibitor of the amino acid-sensing branch of the TORC1 signaling pathway. The two GATOR subcomplexes, GATOR1 and GATOR2, regulate the TORC1 pathway in order to mediate metabolic homeostasis, female gametogenesis and the response to amino acid limitation and complete starvation. The function of GATOR1 in negatively regulating the TORC1 pathway is essential for maintaining baseline levels of TORC1 activity under nutrient rich conditions, and for promoting survival during amino acid or complete starvation by inhibiting TORC1-dependent cell growth and promoting catabolic metabolism and autophagy. In addition, this inhibition of TORC1 is necessary to maintain female fertility under normal conditions and during periods of nutrient stress. GATOR1 and GATOR2 act at different stages of oogenesis to regulate TORC1 in order to control meiotic entry and promote oocyte growth and development. After exactly four mitotic cyst divisions, the GATOR1 complex members (Iml1, Nprl2 and Nprl3) down-regulate TORC1 to slow cellular metabolism and promote the mitotic/meiotic transition. At later stages of oogenesis, the mio and Nup44A components of the GATOR2 complex inhibit GATOR1 and thus activate TORC1 to promote meiotic progression, and drive oocyte growth and development. The polypeptide is GATOR complex protein NPRL2 (Drosophila melanogaster (Fruit fly)).